The chain runs to 217 residues: Translation initiation factor IF-3 (217 aa).

It belongs to the IF-3 family. As to quaternary structure, monomer.

The protein resides in the cytoplasm. Its function is as follows. IF-3 binds to the 30S ribosomal subunit and shifts the equilibrium between 70S ribosomes and their 50S and 30S subunits in favor of the free subunits, thus enhancing the availability of 30S subunits on which protein synthesis initiation begins. The chain is Translation initiation factor IF-3 from Synechococcus sp. (strain CC9902).